We begin with the raw amino-acid sequence, 116 residues long: MNQNLLWFEKLKFNNQDLIPAIAQDYRDGTVLMMAWMNSESIQKTLSTGEAHYWSRSRSQLWHKGATSGHIQKVKELFYDCDGDTILLKVEQIGDIACHTGARSCFFNAVPIYPQS.

D80 is a binding site for Mg(2+). C81 provides a ligand contact to Zn(2+). The Mg(2+) site is built by D82 and D84. C98 and C105 together coordinate Zn(2+).

It belongs to the PRA-CH family. Homodimer. Requires Mg(2+) as cofactor. The cofactor is Zn(2+).

The protein localises to the cytoplasm. It carries out the reaction 1-(5-phospho-beta-D-ribosyl)-5'-AMP + H2O = 1-(5-phospho-beta-D-ribosyl)-5-[(5-phospho-beta-D-ribosylamino)methylideneamino]imidazole-4-carboxamide. It functions in the pathway amino-acid biosynthesis; L-histidine biosynthesis; L-histidine from 5-phospho-alpha-D-ribose 1-diphosphate: step 3/9. In terms of biological role, catalyzes the hydrolysis of the adenine ring of phosphoribosyl-AMP. The protein is Phosphoribosyl-AMP cyclohydrolase of Trichormus variabilis (strain ATCC 29413 / PCC 7937) (Anabaena variabilis).